We begin with the raw amino-acid sequence, 274 residues long: 3-methyl-2-oxobutanoate hydroxymethyltransferase (274 aa).

2 residues coordinate Mg(2+): Asp49 and Asp88. Residues 49 to 50 (DS), Asp88, and Lys118 each bind 3-methyl-2-oxobutanoate. Glu120 contributes to the Mg(2+) binding site. The Proton acceptor role is filled by Glu187.

It belongs to the PanB family. Homodecamer; pentamer of dimers. Mg(2+) is required as a cofactor.

The protein localises to the cytoplasm. It carries out the reaction 3-methyl-2-oxobutanoate + (6R)-5,10-methylene-5,6,7,8-tetrahydrofolate + H2O = 2-dehydropantoate + (6S)-5,6,7,8-tetrahydrofolate. It functions in the pathway cofactor biosynthesis; (R)-pantothenate biosynthesis; (R)-pantoate from 3-methyl-2-oxobutanoate: step 1/2. In terms of biological role, catalyzes the reversible reaction in which hydroxymethyl group from 5,10-methylenetetrahydrofolate is transferred onto alpha-ketoisovalerate to form ketopantoate. This chain is 3-methyl-2-oxobutanoate hydroxymethyltransferase, found in Rhodopseudomonas palustris (strain HaA2).